The sequence spans 860 residues: Transcription factor E2F8 (860 aa).

A disordered region spans residues 1–114 (MENQKENLFS…NEKSQPSRKE (114 aa)). A Phosphoserine modification is found at Ser71. Basic and acidic residues-rich tracts occupy residues 74 to 84 (IRSRDQKRGLS) and 92 to 114 (EARDCLHEPQAKTNEKSQPSRKE). 2 DNA-binding regions span residues 112 to 181 (RKEK…TWHG) and 261 to 347 (RKDK…KWTG). 2 disordered regions span residues 407-433 (RRKISSAPSSPVKSSKAESSQNSPPVP) and 533-616 (TPPH…PKED). Residues 411–426 (SSAPSSPVKSSKAESS) are compositionally biased toward low complexity. Ser412 and Ser416 each carry phosphoserine. The segment covering 542-554 (VCPTQSSNATGSK) has biased composition (polar residues). Composition is skewed to basic and acidic residues over residues 555–565 (DPTDAPTEKTA) and 586–596 (RSKETTGDRGT).

It belongs to the E2F/DP family. In terms of assembly, homodimer and heterodimer: mainly forms homodimers and, to a lesser extent, heterodimers with E2F8. Dimerization is important for DNA-binding. Interacts with HIF1A.

Its subcellular location is the nucleus. Functionally, atypical E2F transcription factor that participates in various processes such as angiogenesis and polyploidization of specialized cells. Mainly acts as a transcription repressor that binds DNA independently of DP proteins and specifically recognizes the E2 recognition site 5'-TTTC[CG]CGC-3'. Directly represses transcription of classical E2F transcription factors such as E2F1: component of a feedback loop in S phase by repressing the expression of E2F1, thereby preventing p53/TP53-dependent apoptosis. Plays a key role in polyploidization of cells in placenta and liver by regulating the endocycle, probably by repressing genes promoting cytokinesis and antagonizing action of classical E2F proteins (E2F1, E2F2 and/or E2F3). Required for placental development by promoting polyploidization of trophoblast giant cells. Acts as a promoter of sprouting angiogenesis, possibly by acting as a transcription activator: associates with HIF1A, recognizes and binds the VEGFA promoter, which is different from canonical E2 recognition site, and activates expression of the VEGFA gene. The polypeptide is Transcription factor E2F8 (E2f8) (Rattus norvegicus (Rat)).